A 423-amino-acid chain; its full sequence is Imidazolonepropionase (423 aa).

Fe(3+)-binding residues include histidine 78 and histidine 80. Histidine 78 and histidine 80 together coordinate Zn(2+). 4-imidazolone-5-propanoate is bound by residues arginine 87, tyrosine 150, and histidine 183. Tyrosine 150 provides a ligand contact to N-formimidoyl-L-glutamate. Histidine 247 serves as a coordination point for Fe(3+). Zn(2+) is bound at residue histidine 247. Position 250 (glutamate 250) interacts with 4-imidazolone-5-propanoate. Aspartate 322 serves as a coordination point for Fe(3+). Position 322 (aspartate 322) interacts with Zn(2+). Residues asparagine 324 and glycine 326 each contribute to the N-formimidoyl-L-glutamate site. Serine 327 lines the 4-imidazolone-5-propanoate pocket.

The protein belongs to the metallo-dependent hydrolases superfamily. HutI family. Requires Zn(2+) as cofactor. The cofactor is Fe(3+).

The protein resides in the cytoplasm. The catalysed reaction is 4-imidazolone-5-propanoate + H2O = N-formimidoyl-L-glutamate. It functions in the pathway amino-acid degradation; L-histidine degradation into L-glutamate; N-formimidoyl-L-glutamate from L-histidine: step 3/3. Functionally, catalyzes the hydrolytic cleavage of the carbon-nitrogen bond in imidazolone-5-propanoate to yield N-formimidoyl-L-glutamate. It is the third step in the universal histidine degradation pathway. This Bacillus cereus (strain ZK / E33L) protein is Imidazolonepropionase.